The primary structure comprises 298 residues: Leucine-rich repeat-containing protein 38 (298 aa).

The first 31 residues, 1-31 (MSLCVAPRHPTGAAAALGLGSLLVLLGPGRA), serve as a signal peptide directing secretion. Intrachain disulfides connect Cys-32–Cys-38 and Cys-36–Cys-46. Residues 32-60 (CPAGCACTDPHTVDCRDRGLPSVPDPFPL) enclose the LRRNT domain. Topologically, residues 32–251 (CPAGCACTDP…ECKFSLSLTD (220 aa)) are extracellular. LRR repeat units lie at residues 61–82 (DVRKLLVAGNRIQQIPEDFFIF), 85–106 (DLVYLDFRNNSLRSLEEGTFSG), 109–130 (KLAFLDLSYNNLTQLGAGAFRS), 133–154 (RLVKLSLANNHLAGVHEAAFES), and 157–177 (SLQVLELNDNNLRSLNVAALD). N-linked (GlcNAc...) asparagine glycosylation is present at Asn-119. The region spanning 190–245 (NPWLCDCDFAHLFSWIQENTSKLPKGLDAIQCSLPMEDRRVALRELSEASFSECKF) is the LRRCT domain. 2 disulfides stabilise this stretch: Cys-194–Cys-221 and Cys-196–Cys-243. Residues 252-272 (LFIIIFSGVAVSIAAIISSFF) traverse the membrane as a helical segment. Topologically, residues 273–298 (LATVVQCFQRCAPNKDTEDEDDDEDD) are cytoplasmic.

In terms of assembly, interacts with KCNMA1.

Its subcellular location is the cell membrane. Auxiliary protein of the large-conductance, voltage and calcium-activated potassium channel (BK alpha). Modulates gating properties by producing a marked shift in the BK channel's voltage dependence of activation in the hyperpolarizing direction, and in the absence of calcium. The polypeptide is Leucine-rich repeat-containing protein 38 (Lrrc38) (Mus musculus (Mouse)).